The sequence spans 353 residues: Photosystem II protein D1 (353 aa).

N-acetylthreonine is present on T2. T2 bears the Phosphothreonine mark. The next 3 helical transmembrane spans lie at 29–46 (YIGWFGVLMIPTLLTATS), 118–133 (HFLLGVACYMGREWEL), and 142–156 (WIAVAYSAPVAAATA). A chlorophyll a-binding site is contributed by H118. Y126 contacts pheophytin a. 2 residues coordinate [CaMn4O5] cluster: D170 and E189. Residues 197–218 (FHMLGVAGVFGGSLFSAMHGSL) form a helical membrane-spanning segment. Residue H198 coordinates chlorophyll a. Residues H215 and 264–265 (SF) each bind a quinone. H215 is a Fe cation binding site. Position 272 (H272) interacts with Fe cation. A helical transmembrane segment spans residues 274-288 (FLAAWPVVGIWFTAL). Positions 332, 333, 342, and 344 each coordinate [CaMn4O5] cluster. The propeptide occupies 345–353 (VVEAPSTNG).

This sequence belongs to the reaction center PufL/M/PsbA/D family. PSII is composed of 1 copy each of membrane proteins PsbA, PsbB, PsbC, PsbD, PsbE, PsbF, PsbH, PsbI, PsbJ, PsbK, PsbL, PsbM, PsbT, PsbX, PsbY, PsbZ, Psb30/Ycf12, at least 3 peripheral proteins of the oxygen-evolving complex and a large number of cofactors. It forms dimeric complexes. It depends on The D1/D2 heterodimer binds P680, chlorophylls that are the primary electron donor of PSII, and subsequent electron acceptors. It shares a non-heme iron and each subunit binds pheophytin, quinone, additional chlorophylls, carotenoids and lipids. D1 provides most of the ligands for the Mn4-Ca-O5 cluster of the oxygen-evolving complex (OEC). There is also a Cl(-1) ion associated with D1 and D2, which is required for oxygen evolution. The PSII complex binds additional chlorophylls, carotenoids and specific lipids. as a cofactor. Tyr-161 forms a radical intermediate that is referred to as redox-active TyrZ, YZ or Y-Z. In terms of processing, C-terminally processed by CTPA; processing is essential to allow assembly of the oxygen-evolving complex and thus photosynthetic growth.

It localises to the plastid. Its subcellular location is the chloroplast thylakoid membrane. The catalysed reaction is 2 a plastoquinone + 4 hnu + 2 H2O = 2 a plastoquinol + O2. Its function is as follows. Photosystem II (PSII) is a light-driven water:plastoquinone oxidoreductase that uses light energy to abstract electrons from H(2)O, generating O(2) and a proton gradient subsequently used for ATP formation. It consists of a core antenna complex that captures photons, and an electron transfer chain that converts photonic excitation into a charge separation. The D1/D2 (PsbA/PsbD) reaction center heterodimer binds P680, the primary electron donor of PSII as well as several subsequent electron acceptors. This is Photosystem II protein D1 from Aethionema grandiflorum (Persian stone-cress).